The chain runs to 852 residues: Carbohydrate-responsive element-binding protein (852 aa).

The segment covering 1–12 (MAGALAGLAAGL) has biased composition (low complexity). 2 disordered regions span residues 1–36 (MAGALAGLAAGLQVPRVAPSPDSDSDTDSEDPSLRR) and 54–80 (VSSPHSDSLPRRRDQEGSVGPSDFGPR). Phosphoserine is present on residues Ser20, Ser23, and Ser25. A Phosphothreonine modification is found at Thr27. A Phosphoserine modification is found at Ser29. At Ser196 the chain carries Phosphoserine. Disordered stretches follow at residues 328 to 365 (DSLFSSGTLGPEVPPASSAMTHLSGHSRLQARNSCPGP), 486 to 527 (PCFS…NNPC), and 548 to 648 (STLL…NKTE). Low complexity predominate over residues 505 to 521 (ASPPTLAPATASPPTTA). Positions 548–559 (STLLRSPGSPQE) are enriched in polar residues. A Phosphoserine; by AMPK modification is found at Ser556. The span at 568 to 584 (FLPPTPAPTPPRPPPGP) shows a compositional bias: pro residues. 3 positions are modified to phosphoserine: Ser602, Ser614, and Ser631. In terms of domain architecture, bHLH spans 649–703 (NRRITHISAEQKRRFNIKLGFDTLHGLVSTLSAQPSLKVSKATTLQKTAEYILML). The leucine-zipper stretch occupies residues 703-724 (LQQERAGLQEEAQQLRDEIEEL).

Binds DNA as a heterodimer with MLX/TCFL4. In terms of processing, phosphorylation at Ser-556 by AMPK inactivates the DNA-binding activity. Expressed in liver, heart, kidney, cerebellum and intestinal tissues.

The protein resides in the nucleus. Binds DNA as a heterodimer with MLX/TCFL4 and activates transcription. Binds to the canonical E box sequence 5'-CACGTG-3'. Plays a role in transcriptional activation of glycolytic target genes. Involved in glucose-responsive gene regulation. Regulates transcription in response to changes in cellular carbohydrate abundance such as occurs during fasting to feeding metabolic transition. Refeeding stimulates MLXIPL/ChREBP transcription factor, leading to increased BCKDK to PPM1K expression ratio, phosphorylation and activation of ACLY that ultimately results in the generation of malonyl-CoA and oxaloacetate immediate substrates of de novo lipogenesis and gluconeogenesis, respectively. The sequence is that of Carbohydrate-responsive element-binding protein (MLXIPL) from Homo sapiens (Human).